A 503-amino-acid polypeptide reads, in one-letter code: Aromatase 1 (503 aa).

Position 437 (Cys-437) interacts with heme.

It belongs to the cytochrome P450 family. Requires heme as cofactor.

It is found in the membrane. The catalysed reaction is testosterone + 3 reduced [NADPH--hemoprotein reductase] + 3 O2 = 17beta-estradiol + formate + 3 oxidized [NADPH--hemoprotein reductase] + 4 H2O + 4 H(+). The enzyme catalyses androst-4-ene-3,17-dione + 3 reduced [NADPH--hemoprotein reductase] + 3 O2 = estrone + formate + 3 oxidized [NADPH--hemoprotein reductase] + 4 H2O + 4 H(+). In terms of biological role, catalyzes the formation of aromatic C18 estrogens from C19 androgens. The chain is Aromatase 1 (CYP19A1) from Sus scrofa (Pig).